The primary structure comprises 94 residues: Integration host factor subunit beta (94 aa).

The protein belongs to the bacterial histone-like protein family. Heterodimer of an alpha and a beta chain.

In terms of biological role, this protein is one of the two subunits of integration host factor, a specific DNA-binding protein that functions in genetic recombination as well as in transcriptional and translational control. In Photorhabdus laumondii subsp. laumondii (strain DSM 15139 / CIP 105565 / TT01) (Photorhabdus luminescens subsp. laumondii), this protein is Integration host factor subunit beta.